We begin with the raw amino-acid sequence, 613 residues long: Alkyldihydroxyacetonephosphate synthase (613 aa).

The region spanning 126–307 is the FAD-binding PCMH-type domain; sequence IDRPPDAVIL…TEAVVKIERL (182 aa). FAD is bound by residues 158 to 164, 228 to 234, 241 to 244, and 291 to 297; these read PFGGGTN, DSYAYST, ARGS, and EGAFGLV. Arginine 437 lines the substrate pocket. Catalysis depends on tyrosine 498, which acts as the Proton donor/acceptor. Residues 534–536 form an important for enzyme activity region; that stretch reads HHH. The interval 572 to 593 is disordered; it reads NPGKLLPSPPSEKETPKATQAR. Residues 611 to 613 carry the Microbody targeting signal motif; the sequence is AHL.

It belongs to the FAD-binding oxidoreductase/transferase type 4 family. Homodimer. The cofactor is FAD.

Its subcellular location is the peroxisome. The enzyme catalyses a long chain fatty alcohol + a 1-acylglycerone 3-phosphate = a 1-O-alkylglycerone 3-phosphate + a long-chain fatty acid + H(+). Its pathway is glycerolipid metabolism; ether lipid biosynthesis. In terms of biological role, catalyzes the exchange of an acyl for a long-chain alkyl group and the formation of the ether bond in the biosynthesis of ether phospholipids. This is Alkyldihydroxyacetonephosphate synthase from Trypanosoma brucei brucei.